The chain runs to 1693 residues: Latrophilin Cirl (1693 aa).

Residues 1–774 (MVLQGAKQRL…LFTMFDGNMR (774 aa)) are Extracellular-facing. The region spanning 30–119 (ACEGKKLTIE…KYLEAHYQCV (90 aa)) is the SUEL-type lectin domain. N-linked (GlcNAc...) asparagine glycans are attached at residues Asn-147, Asn-260, Asn-306, and Asn-345. The interval 190–309 (PPATHATPPG…GPSVSSNGSA (120 aa)) is disordered. 2 stretches are compositionally biased toward polar residues: residues 259–269 (SNATAPSNTRI) and 287–309 (KSSPNRTPGTAASGPSVSSNGSA). A disordered region spans residues 379–406 (SFDEDDEEMAGTSTTTPMSTSGDCLHNS). Residues 390-399 (TSTTTPMSTS) are compositionally biased toward low complexity. Asn-405, Asn-662, Asn-710, and Asn-737 each carry an N-linked (GlcNAc...) asparagine glycan. In terms of domain architecture, GAIN-B spans 568–761 (RSVVQKVKNI…AILMDVVDEH (194 aa)). Cystine bridges form between Cys-716/Cys-743 and Cys-731/Cys-745. Residues 716–761 (CVFWNYIDHAWSANGCSLESTNRTHSVCSCNHLTNFAILMDVVDEH) are GPS. A helical transmembrane segment spans residues 775–795 (IFIYISIAICVVFIVIALLTL). The Cytoplasmic portion of the chain corresponds to 796–808 (KLFNGVFVKSART). The chain crosses the membrane as a helical span at residues 809–829 (SIYINIYICLLAIELLFLLGI). Topologically, residues 830-835 (EQTETS) are extracellular. The helical transmembrane segment at 836–856 (IFCGFITVFLHCAILSGTSWF) threads the bilayer. The Cytoplasmic segment spans residues 857-882 (CYEAFHSYSTLTSDELLLEVDQTPKV). A helical transmembrane segment spans residues 883 to 903 (NCYYLLSYGLSLSVVAISLVI). Residues 904–927 (NPSTYTQNDYCVLMEANAVFYATF) are Extracellular-facing. The chain crosses the membrane as a helical span at residues 928 to 948 (VAPVLIFFMAAIGYTFLSWII). Residues 949–975 (MCRKSRTGLKTKEHTRLATVRFDIRCS) are Cytoplasmic-facing. The chain crosses the membrane as a helical span at residues 976–996 (FVFFLLLSAVWCSAYFYLRGA). Residues 997–1003 (KMDEDVT) lie on the Extracellular side of the membrane. Residues 1004 to 1024 (GIYGYNFICFNTLLGLYIFVF) form a helical membrane-spanning segment. The Cytoplasmic segment spans residues 1025 to 1693 (HCIQNEKIRR…VRCYLEPLAK (669 aa)). Residues 1089–1109 (PLGTNDDAHDEQQQQQHMSAT) are disordered. Residues Ser-1165, Ser-1256, and Ser-1263 each carry the phosphoserine modification. Disordered regions lie at residues 1237 to 1264 (KPNSQHGKKKRGGVGAIPASPSGSLHSR), 1279 to 1362 (KTKP…APPP), 1450 to 1529 (SRYG…LPPQ), and 1596 to 1678 (SMRG…SAML). The span at 1307–1323 (QQQQQLRQQRQQQQQQL) shows a compositional bias: low complexity. Residues Ser-1324 and Ser-1325 each carry the phosphoserine modification. Residues 1337 to 1357 (LHLQHQQQQQQQRRAGGQQQL) are compositionally biased toward low complexity. Over residues 1464-1475 (RNQQQQQHSLAQ) the composition is skewed to polar residues. Composition is skewed to acidic residues over residues 1485–1498 (DEDDDEDEDDEETT) and 1508–1521 (CDEEEEDEESDMED). The segment covering 1640-1663 (QQLQKLSPQSTTSSSSHTSHSNPH) has biased composition (low complexity).

Belongs to the G-protein coupled receptor 2 family. LN-TM7 subfamily. In terms of assembly, forms a heterodimer, consisting of a large extracellular region non-covalently linked to a seven-transmembrane moiety. Post-translationally, proteolytically cleaved into 2 subunits, an extracellular subunit and a seven-transmembrane subunit.

Its subcellular location is the cell membrane. This is Latrophilin Cirl from Drosophila pseudoobscura pseudoobscura (Fruit fly).